Consider the following 422-residue polypeptide: Serine hydroxymethyltransferase (422 aa).

(6S)-5,6,7,8-tetrahydrofolate contacts are provided by residues Leu-113 and 117-119 (GHL). Lys-222 carries the N6-(pyridoxal phosphate)lysine modification.

This sequence belongs to the SHMT family. Homodimer. The cofactor is pyridoxal 5'-phosphate.

It is found in the cytoplasm. It catalyses the reaction (6R)-5,10-methylene-5,6,7,8-tetrahydrofolate + glycine + H2O = (6S)-5,6,7,8-tetrahydrofolate + L-serine. The protein operates within one-carbon metabolism; tetrahydrofolate interconversion. Its pathway is amino-acid biosynthesis; glycine biosynthesis; glycine from L-serine: step 1/1. Its function is as follows. Catalyzes the reversible interconversion of serine and glycine with tetrahydrofolate (THF) serving as the one-carbon carrier. This reaction serves as the major source of one-carbon groups required for the biosynthesis of purines, thymidylate, methionine, and other important biomolecules. Also exhibits THF-independent aldolase activity toward beta-hydroxyamino acids, producing glycine and aldehydes, via a retro-aldol mechanism. The polypeptide is Serine hydroxymethyltransferase (Amoebophilus asiaticus (strain 5a2)).